Consider the following 101-residue polypeptide: Ubiquitin-related modifier 1 homolog (101 aa).

Gly-101 bears the 1-thioglycine mark. Gly-101 is covalently cross-linked (Glycyl lysine isopeptide (Gly-Lys) (interchain with K-? in acceptor proteins)).

This sequence belongs to the URM1 family. As to quaternary structure, interacts with cer. In terms of processing, C-terminal thiocarboxylation occurs in 2 steps, it is first acyl-adenylated (-COAMP) via the hesA/moeB/thiF part of the MOCS3 homolog, then thiocarboxylated (-COSH) via the rhodanese domain of the MOCS3 homolog.

The protein resides in the cytoplasm. The protein operates within tRNA modification; 5-methoxycarbonylmethyl-2-thiouridine-tRNA biosynthesis. Acts as a sulfur carrier required for 2-thiolation of mcm(5)S(2)U at tRNA wobble positions of cytosolic tRNA(Lys), tRNA(Glu) and tRNA(Gln). Serves as sulfur donor in tRNA 2-thiolation reaction by being thiocarboxylated (-COSH) at its C-terminus by MOCS3. The sulfur is then transferred to tRNA to form 2-thiolation of mcm(5)S(2)U. Also acts as a ubiquitin-like protein (UBL) that is covalently conjugated via an isopeptide bond to lysine residues of target proteins such as Prx2/Jafrac1, Ciao1, Eip71CD and GILT1. The thiocarboxylated form serves as substrate for conjugation and oxidative stress specifically induces the formation of UBL-protein conjugates. In Drosophila ananassae (Fruit fly), this protein is Ubiquitin-related modifier 1 homolog.